A 953-amino-acid chain; its full sequence is Translation initiation factor IF-2 (953 aa).

Disordered regions lie at residues 52 to 247 and 279 to 363; these read KASK…LAEL and TKLK…TERK. Basic and acidic residues-rich tracts occupy residues 80–89, 98–111, and 140–188; these read TGSEHVEKTQ, FKAEREARAKEQAA, and QGDK…ENHK. Polar residues predominate over residues 191-207; the sequence is RFTNQKKQGRQEPQSKS. Positions 229–247 are enriched in basic and acidic residues; sequence RQSETRFRAQQEAKRLAEL. Positions 282-291 are enriched in polar residues; the sequence is KSSNISAKST. Positions 300–317 are enriched in basic and acidic residues; the sequence is ARPEKNRELTHHSQEGQK. A compositionally biased stretch (low complexity) spans 322 to 338; the sequence is SWNSQNQVRNQKNSNWN. The segment covering 339-348 has biased composition (basic residues); the sequence is KNKKTKKGKN. The tr-type G domain maps to 454–623; it reads ERAPVVTIMG…LLVAEVEELK (170 aa). Residues 463–470 form a G1 region; sequence GHVDHGKT. Residue 463 to 470 participates in GTP binding; it reads GHVDHGKT. Residues 488 to 492 form a G2 region; that stretch reads GITQH. Positions 509–512 are G3; the sequence is DTPG. GTP contacts are provided by residues 509–513 and 563–566; these read DTPGH and NKID. Residues 563-566 are G4; it reads NKID. The G5 stretch occupies residues 599–601; it reads SAK.

The protein belongs to the TRAFAC class translation factor GTPase superfamily. Classic translation factor GTPase family. IF-2 subfamily.

It localises to the cytoplasm. Its function is as follows. One of the essential components for the initiation of protein synthesis. Protects formylmethionyl-tRNA from spontaneous hydrolysis and promotes its binding to the 30S ribosomal subunits. Also involved in the hydrolysis of GTP during the formation of the 70S ribosomal complex. The protein is Translation initiation factor IF-2 of Streptococcus pyogenes serotype M5 (strain Manfredo).